The chain runs to 86 residues: Protein P17 (86 aa).

Residues Ser63–Gln86 are disordered.

As to quaternary structure, homotetramer.

Functionally, assembly protein that acts late in phage assembly, after capsid protein folding and multimerization, and sorting of membrane proteins has occurred. The major coat protein P3 and two assembly factors (P10 and P17) are needed during the assembly of the virus particle inside the host cell, when the capsid protein multimers are capable of enclosing the host-derived membrane, containing the virus-encoded membrane-associated proteins. The protein is Protein P17 (XVII) of Enterobacteria phage PRD1 (Bacteriophage PRD1).